A 151-amino-acid polypeptide reads, in one-letter code: Chaperonin GroEL (151 aa).

Asp-41–Thr-45 is a binding site for ATP.

The protein belongs to the chaperonin (HSP60) family. Forms a cylinder of 14 subunits composed of two heptameric rings stacked back-to-back. Interacts with the co-chaperonin GroES.

It localises to the cytoplasm. The enzyme catalyses ATP + H2O + a folded polypeptide = ADP + phosphate + an unfolded polypeptide.. Functionally, together with its co-chaperonin GroES, plays an essential role in assisting protein folding. The GroEL-GroES system forms a nano-cage that allows encapsulation of the non-native substrate proteins and provides a physical environment optimized to promote and accelerate protein folding. This Mycobacterium marinum protein is Chaperonin GroEL.